The following is a 311-amino-acid chain: Malate dehydrogenase (311 aa).

Residues 7–13 (GAAGGIG) and Asp-34 each bind NAD(+). Residues Arg-81 and Arg-87 each contribute to the substrate site. NAD(+)-binding positions include Asn-94 and 117–119 (ITN). Residues Asn-119 and Arg-153 each contribute to the substrate site. His-177 acts as the Proton acceptor in catalysis. An NAD(+)-binding site is contributed by Met-227.

This sequence belongs to the LDH/MDH superfamily. MDH type 1 family. In terms of assembly, homodimer.

It carries out the reaction (S)-malate + NAD(+) = oxaloacetate + NADH + H(+). Functionally, catalyzes the reversible oxidation of malate to oxaloacetate. In Vibrio atlanticus (strain LGP32) (Vibrio splendidus (strain Mel32)), this protein is Malate dehydrogenase.